The primary structure comprises 243 residues: MLIIPAIDLKDGQCVRLRQGLMDDSTVFSDDPVAMARQWVDQGCRRLHLVDLNGAFEGKPVNGGVVTAIAKAYPGLPIQIGGGIRSAATIEYYLQAGVQSVIIGTKAVKEPQFVTDMCKAFPGHIIVGLDAKDGWVATDGWAEVSNVQATELAKRFEQDGVSSIVYTDIARDGMMQGVNVQATVTMAQASSIPVIASGGITNMDDIRALKAEAHKGICGAITGRAIYEGTLNMAEAQAYCDAN.

Aspartate 8 (proton acceptor) is an active-site residue. Aspartate 130 (proton donor) is an active-site residue.

It belongs to the HisA/HisF family.

The protein localises to the cytoplasm. The catalysed reaction is 1-(5-phospho-beta-D-ribosyl)-5-[(5-phospho-beta-D-ribosylamino)methylideneamino]imidazole-4-carboxamide = 5-[(5-phospho-1-deoxy-D-ribulos-1-ylimino)methylamino]-1-(5-phospho-beta-D-ribosyl)imidazole-4-carboxamide. Its pathway is amino-acid biosynthesis; L-histidine biosynthesis; L-histidine from 5-phospho-alpha-D-ribose 1-diphosphate: step 4/9. The polypeptide is 1-(5-phosphoribosyl)-5-[(5-phosphoribosylamino)methylideneamino] imidazole-4-carboxamide isomerase (Cellvibrio japonicus (strain Ueda107) (Pseudomonas fluorescens subsp. cellulosa)).